The sequence spans 92 residues: uncharacterized protein (92 aa).

This is an uncharacterized protein from Methanocaldococcus jannaschii (strain ATCC 43067 / DSM 2661 / JAL-1 / JCM 10045 / NBRC 100440) (Methanococcus jannaschii).